The sequence spans 562 residues: NRAMP-like transporter smf-1 (562 aa).

The Cytoplasmic segment spans residues 1–55; the sequence is MASSNNDGPIEPEAEPWRITQNDHLEQDLLEEDAESQERVDIPVDDVEKAFSFKK. A helical membrane pass occupies residues 56-76; it reads LWAFTGPGFLMSIAYLDPGNI. The Extracellular portion of the chain corresponds to 77–83; sequence ESDLQSG. A helical transmembrane segment spans residues 84-104; that stretch reads AQAAYKLLWVLLSAHIIGMLL. The Cytoplasmic segment spans residues 105-140; the sequence is QRMSARLGVVSGKHMAEVAYQFYPRLPRIILWLMIE. A helical transmembrane segment spans residues 141-161; sequence IAIVCSDMQEVIGTAIAIFLL. Residues 162-164 are Extracellular-facing; the sequence is SKG. A helical transmembrane segment spans residues 165 to 185; sequence FVPLYVGVFITILDTFTFLLI. The Cytoplasmic segment spans residues 186-194; sequence DRYGIRKLE. A helical membrane pass occupies residues 195-215; sequence LIFGFLILTMTVSFGYEFVVV. The Extracellular portion of the chain corresponds to 216 to 241; it reads KPPIGEVISGMVVPWCAGCGKGEFMQ. A helical transmembrane segment spans residues 242–262; that stretch reads AISVVGAVIMPHNLYLHSALV. Residues 263-287 are Cytoplasmic-facing; sequence KSRRVDRKDRRRVAEANKYFTLESA. The helical transmembrane segment at 288-308 threads the bilayer; that stretch reads IALFLSFFINLFVVAVFAHGL. Topologically, residues 309-347 are extracellular; it reads YQKTNADVREMCIARHDIPDADIFPNNTEPVEVDIYKGG. Asn-334 carries an N-linked (GlcNAc...) asparagine glycan. A helical transmembrane segment spans residues 348–368; sequence IYLGCQFGAIAMFIWGIGIFA. Over 369 to 398 the chain is Cytoplasmic; sequence AGQSSTMTGTYTGQFVMEGFVKIEWPKWKR. Residues 399-419 traverse the membrane as a helical segment; the sequence is VLITRAIAITPTLVLTFYSQG. Topologically, residues 420 to 428 are extracellular; that stretch reads VQNLTGMND. N-linked (GlcNAc...) asparagine glycosylation is present at Asn-422. Residues 429–449 form a helical membrane-spanning segment; the sequence is FLNCVQMIQLPFALIPIITFT. Residues 450–462 are Cytoplasmic-facing; the sequence is SSRKIMHDFRSSK. The helical transmembrane segment at 463–483 threads the bilayer; it reads VFQIFALITSALILSINVYFI. At 484-496 the chain is on the extracellular side; it reads SDYVFSRLGSEWY. The chain crosses the membrane as a helical span at residues 497–517; sequence IIMVLAPITFAYVLFVLYLAL. The Cytoplasmic portion of the chain corresponds to 518 to 562; that stretch reads YCLVSCEIIPDTVSIRGFSFNKSYENDAPWLAVDSSAVHDNAGYQ.

It belongs to the NRAMP family. In terms of tissue distribution, expressed in dopaminergic neurons (at protein level). Expressed predominantly in anterior and posterior intestine, rectal gland cell, H-shaped excretory cell, vulva cells, proximal uterus and spermatheca in adults. Weakly expressed in hyp7 hypodermis, pharyngeal muscles and some anterior sensory, ring and posterior head neurons in adults. Expressed in the anchor cell at the larval stage.

It is found in the apical cell membrane. It localises to the cytoplasmic vesicle membrane. In terms of biological role, probable divalent metal ion transporter which regulates Mn(2+) uptake. This is NRAMP-like transporter smf-1 (smf-1) from Caenorhabditis elegans.